The following is a 1127-amino-acid chain: Zinc finger protein basonuclin-2 (1127 aa).

Residues 44–67 are disordered; it reads SEEAEVDVRERDTQRDREPKRARD. Residues 49-67 are compositionally biased toward basic and acidic residues; it reads VDVRERDTQRDREPKRARD. K305 participates in a covalent cross-link: Glycyl lysine isopeptide (Lys-Gly) (interchain with G-Cter in SUMO2). The tract at residues 386-450 is disordered; sequence STQNEYNESS…DLSKTEHPKS (65 aa). The span at 389-400 shows a compositional bias: low complexity; it reads NEYNESSESEVS. Over residues 403–422 the composition is skewed to polar residues; it reads PYKSDQTPNRNALTSITNVE. Glycyl lysine isopeptide (Lys-Gly) (interchain with G-Cter in SUMO2) cross-links involve residues K424, K444, and K449. A C2H2-type 1 zinc finger spans residues 469–492; it reads VFCNACGKTFYDKGTLKIHYNAVH. The residue at position 589 (S589) is a Phosphoserine. A Glycyl lysine isopeptide (Lys-Gly) (interchain with G-Cter in SUMO2) cross-link involves residue K669. Positions 675 to 772 are disordered; the sequence is IDTADEFDDE…EESMEGDEHL (98 aa). Residues 676 to 689 are compositionally biased toward acidic residues; sequence DTADEFDDEDDDPN. 2 stretches are compositionally biased toward basic and acidic residues: residues 698-708 and 747-772; these read MSHDNHCHSQD and ERDY…DEHL. Residues 861–884 form a C2H2-type 2 zinc finger; sequence KICYVCKKSFKSSYSVKLHYRNVH. Residues K922 and K947 each participate in a glycyl lysine isopeptide (Lys-Gly) (interchain with G-Cter in SUMO2) cross-link. Disordered regions lie at residues 955–976 and 996–1041; these read LGLD…HLNG and LQSS…TLPG. Residues 1010 to 1023 show a composition bias toward acidic residues; sequence AGSDEGILLDDIDG. C2H2-type zinc fingers lie at residues 1063-1086 and 1091-1118; these read IMCN…KTVH and HKCK…PNLH. Residues 1107-1127 form a disordered region; sequence SRNRHSQNPNLHKNIPFTSID.

As to expression, highly expressed in ovary, testis and kidney. Expressed at moderate levels in skin and small intestine, and at lower levels in lung. Trace amounts of expression detected in liver and colon. Not detected in brain, spleen or thymus.

The protein localises to the nucleus. Functionally, probable transcription factor specific for skin keratinocytes. May play a role in the differentiation of spermatozoa and oocytes. May also play an important role in early urinary-tract development. The protein is Zinc finger protein basonuclin-2 of Mus musculus (Mouse).